The primary structure comprises 701 residues: Elongation factor G (701 aa).

A tr-type G domain is found at 8–290 (SLYRNIGISA…AVVELLPAPT (283 aa)). GTP contacts are provided by residues 17 to 24 (AHIDAGKT), 88 to 92 (DTPGH), and 142 to 145 (NKMD).

The protein belongs to the TRAFAC class translation factor GTPase superfamily. Classic translation factor GTPase family. EF-G/EF-2 subfamily.

The protein resides in the cytoplasm. Its function is as follows. Catalyzes the GTP-dependent ribosomal translocation step during translation elongation. During this step, the ribosome changes from the pre-translocational (PRE) to the post-translocational (POST) state as the newly formed A-site-bound peptidyl-tRNA and P-site-bound deacylated tRNA move to the P and E sites, respectively. Catalyzes the coordinated movement of the two tRNA molecules, the mRNA and conformational changes in the ribosome. In Neisseria meningitidis serogroup C (strain 053442), this protein is Elongation factor G.